A 245-amino-acid polypeptide reads, in one-letter code: 7-cyano-7-deazaguanine synthase 2 (245 aa).

12–22 (FSGGQDSTTCL) serves as a coordination point for ATP. Residues Cys-200, Cys-215, Cys-218, and Cys-221 each contribute to the Zn(2+) site.

The protein belongs to the QueC family. Requires Zn(2+) as cofactor.

The catalysed reaction is 7-carboxy-7-deazaguanine + NH4(+) + ATP = 7-cyano-7-deazaguanine + ADP + phosphate + H2O + H(+). Its pathway is purine metabolism; 7-cyano-7-deazaguanine biosynthesis. In terms of biological role, catalyzes the ATP-dependent conversion of 7-carboxy-7-deazaguanine (CDG) to 7-cyano-7-deazaguanine (preQ(0)). The protein is 7-cyano-7-deazaguanine synthase 2 of Mesorhizobium japonicum (strain LMG 29417 / CECT 9101 / MAFF 303099) (Mesorhizobium loti (strain MAFF 303099)).